The chain runs to 123 residues: Large ribosomal subunit protein uL24 (123 aa).

Belongs to the universal ribosomal protein uL24 family. Part of the 50S ribosomal subunit.

In terms of biological role, one of two assembly initiator proteins, it binds directly to the 5'-end of the 23S rRNA, where it nucleates assembly of the 50S subunit. Located at the polypeptide exit tunnel on the outside of the subunit. This chain is Large ribosomal subunit protein uL24, found in Pyrobaculum aerophilum (strain ATCC 51768 / DSM 7523 / JCM 9630 / CIP 104966 / NBRC 100827 / IM2).